The sequence spans 832 residues: Protein P (832 aa).

Residues 1 to 177 (MPLSCQHFRK…FCGSPYSWEQ (177 aa)) form a terminal protein domain (TP) region. The spacer stretch occupies residues 178 to 335 (ELQHGAEPFC…NCLSHIVNLL (158 aa)). Residues 198–264 (SIGPAVPSQH…HNTASSSSSC (67 aa)) are disordered. The segment at 336-679 (EDWGPCTEHG…YLTLYPVARQ (344 aa)) is polymerase/reverse transcriptase domain (RT). Residues 346-589 (EHLIRIPRTP…YSLHFMGYVI (244 aa)) form the Reverse transcriptase domain. Positions 418, 540, and 541 each coordinate Mg(2+).

This sequence belongs to the hepadnaviridae P protein family.

The catalysed reaction is DNA(n) + a 2'-deoxyribonucleoside 5'-triphosphate = DNA(n+1) + diphosphate. The enzyme catalyses Endonucleolytic cleavage to 5'-phosphomonoester.. With respect to regulation, activated by host HSP70 and HSP40 in vitro to be able to bind the epsilon loop of the pgRNA. Because deletion of the RNase H region renders the protein partly chaperone-independent, the chaperones may be needed indirectly to relieve occlusion of the RNA-binding site by this domain. Inhibited by several reverse-transcriptase inhibitors: Lamivudine, Adefovir and Entecavir. Functionally, multifunctional enzyme that converts the viral RNA genome into dsDNA in viral cytoplasmic capsids. This enzyme displays a DNA polymerase activity that can copy either DNA or RNA templates, and a ribonuclease H (RNase H) activity that cleaves the RNA strand of RNA-DNA heteroduplexes in a partially processive 3'- to 5'-endonucleasic mode. Neo-synthesized pregenomic RNA (pgRNA) are encapsidated together with the P protein, and reverse-transcribed inside the nucleocapsid. Initiation of reverse-transcription occurs first by binding the epsilon loop on the pgRNA genome, and is initiated by protein priming, thereby the 5'-end of (-)DNA is covalently linked to P protein. Partial (+)DNA is synthesized from the (-)DNA template and generates the relaxed circular DNA (RC-DNA) genome. After budding and infection, the RC-DNA migrates in the nucleus, and is converted into a plasmid-like covalently closed circular DNA (cccDNA). The activity of P protein does not seem to be necessary for cccDNA generation, and is presumably released from (+)DNA by host nuclear DNA repair machinery. The chain is Protein P from Pongo pygmaeus (Bornean orangutan).